Consider the following 465-residue polypeptide: Soluble pyridine nucleotide transhydrogenase (465 aa).

36–45 (ERYNNVGGGC) lines the FAD pocket.

The protein belongs to the class-I pyridine nucleotide-disulfide oxidoreductase family. FAD is required as a cofactor.

It localises to the cytoplasm. The enzyme catalyses NAD(+) + NADPH = NADH + NADP(+). Conversion of NADPH, generated by peripheral catabolic pathways, to NADH, which can enter the respiratory chain for energy generation. This Serratia proteamaculans (strain 568) protein is Soluble pyridine nucleotide transhydrogenase.